The following is a 145-amino-acid chain: Large ribosomal subunit protein uL11 (145 aa).

Belongs to the universal ribosomal protein uL11 family. In terms of assembly, part of the ribosomal stalk of the 50S ribosomal subunit. Interacts with L10 and the large rRNA to form the base of the stalk. L10 forms an elongated spine to which L12 dimers bind in a sequential fashion forming a multimeric L10(L12)X complex. One or more lysine residues are methylated.

Functionally, forms part of the ribosomal stalk which helps the ribosome interact with GTP-bound translation factors. This is Large ribosomal subunit protein uL11 from Sulfurihydrogenibium sp. (strain YO3AOP1).